The following is a 292-amino-acid chain: MNERYELNKNLAQMLKGGVIMDVTTPEQAVIAEKAGAVAVMALERVPADIRARGGVARMSDPKIIKEIKAAVSIPVMAKVRIGHFVEAQILEALGIDFIDESEVLTPADEMYHIDKWAFKIPFVCGARNLGEALRRIGEGASMIRTKGEAGTGNVVEAVRHMRIINAEIKRLTTLREDELMAAAKELQAPYDLVKYVAQHGRLPVVNFAAGGIATPADAALMMQLGADGVFVGSGIFKSQNPEKMAEAIVKAVTYYDKPEILAEVSEGLGEAMQSIDIRKLDEKDLYASRGW.

Position 22 (Asp-22) interacts with D-ribose 5-phosphate. Lys-79 (schiff-base intermediate with D-ribose 5-phosphate) is an active-site residue. Gly-151 is a binding site for D-ribose 5-phosphate. Arg-163 provides a ligand contact to D-glyceraldehyde 3-phosphate. D-ribose 5-phosphate contacts are provided by residues Gly-212 and Gly-233–Ser-234.

This sequence belongs to the PdxS/SNZ family. In the presence of PdxT, forms a dodecamer of heterodimers.

It carries out the reaction aldehydo-D-ribose 5-phosphate + D-glyceraldehyde 3-phosphate + L-glutamine = pyridoxal 5'-phosphate + L-glutamate + phosphate + 3 H2O + H(+). The protein operates within cofactor biosynthesis; pyridoxal 5'-phosphate biosynthesis. Catalyzes the formation of pyridoxal 5'-phosphate from ribose 5-phosphate (RBP), glyceraldehyde 3-phosphate (G3P) and ammonia. The ammonia is provided by the PdxT subunit. Can also use ribulose 5-phosphate and dihydroxyacetone phosphate as substrates, resulting from enzyme-catalyzed isomerization of RBP and G3P, respectively. The chain is Pyridoxal 5'-phosphate synthase subunit PdxS from Thermoanaerobacter sp. (strain X514).